The sequence spans 276 residues: 2-dehydro-3-deoxyphosphooctonate aldolase (276 aa).

The protein belongs to the KdsA family.

Its subcellular location is the cytoplasm. The catalysed reaction is D-arabinose 5-phosphate + phosphoenolpyruvate + H2O = 3-deoxy-alpha-D-manno-2-octulosonate-8-phosphate + phosphate. The protein operates within carbohydrate biosynthesis; 3-deoxy-D-manno-octulosonate biosynthesis; 3-deoxy-D-manno-octulosonate from D-ribulose 5-phosphate: step 2/3. It functions in the pathway bacterial outer membrane biogenesis; lipopolysaccharide biosynthesis. This Xanthomonas axonopodis pv. citri (strain 306) protein is 2-dehydro-3-deoxyphosphooctonate aldolase.